Here is a 62-residue protein sequence, read N- to C-terminus: MKVKEIRELTTAEMLDKEKQLKEELFNLRFQLATGQLENTARIKEVRQSIARIKTVLREQAN.

This sequence belongs to the universal ribosomal protein uL29 family.

The polypeptide is Large ribosomal subunit protein uL29 (Enterococcus faecalis (strain ATCC 700802 / V583)).